The primary structure comprises 86 residues: Hepcidin-1 (86 aa).

Positions 1–22 (MKAFSVAVVLVIACMFILESTA) are cleaved as a signal peptide. The propeptide occupies 23-59 (VPFSEVRTEEVGSFDSPVGEHQQPGGESMHLPEPFRF). 4 cysteine pairs are disulfide-bonded: C68–C84, C71–C74, C72–C80, and C75–C83.

Belongs to the hepcidin family.

The protein resides in the secreted. In terms of biological role, seems to act as a signaling molecule involved in the maintenance of iron homeostasis. Seems to be required in conjunction with HFE to regulate both intestinal iron absorption and iron storage in macrophages. May also have antimicrobial activity. The polypeptide is Hepcidin-1 (hamp1) (Salmo salar (Atlantic salmon)).